Reading from the N-terminus, the 100-residue chain is Large ribosomal subunit protein uL23 (100 aa).

It belongs to the universal ribosomal protein uL23 family. Part of the 50S ribosomal subunit. Contacts protein L29, and trigger factor when it is bound to the ribosome.

Functionally, one of the early assembly proteins it binds 23S rRNA. One of the proteins that surrounds the polypeptide exit tunnel on the outside of the ribosome. Forms the main docking site for trigger factor binding to the ribosome. This chain is Large ribosomal subunit protein uL23, found in Kosmotoga olearia (strain ATCC BAA-1733 / DSM 21960 / TBF 19.5.1).